Reading from the N-terminus, the 917-residue chain is Bifunctional aspartokinase/homoserine dehydrogenase 2, chloroplastic (917 aa).

Residues 1 to 89 (MQGLAVSCQL…EVNTYLPKGD (89 aa)) constitute a chloroplast transit peptide. The tract at residues 90-338 (MWSVHKFGGT…VSEAVILSTL (249 aa)) is aspartokinase. The segment at 339 to 563 (SYQEAWEMSY…LSKTTLAVGI (225 aa)) is interface. ACT domains follow at residues 413 to 488 (VEGT…VING) and 494 to 571 (AVGL…LIGG). Residues 564-917 (IGPGLIGGAL…RLASYLGAPS (354 aa)) are homoserine dehydrogenase. NAD(+)-binding residues include I569 and T650. I569, T650, and K674 together coordinate NADP(+). The NADPH site is built by I569, T650, and K674. Na(+) is bound by residues E701, V704, A706, and L708. G759 and E762 together coordinate NADP(+). The L-homoserine site is built by E762 and D773. Residue K777 is the Proton donor of the active site. Residue G894 participates in NAD(+) binding. G894 lines the NADP(+) pocket. NADPH is bound at residue G894.

The protein in the N-terminal section; belongs to the aspartokinase family. It in the C-terminal section; belongs to the homoserine dehydrogenase family. In terms of assembly, homo- or heterodimer. A metal cation is required as a cofactor.

Its subcellular location is the plastid. It localises to the chloroplast. It carries out the reaction L-homoserine + NADP(+) = L-aspartate 4-semialdehyde + NADPH + H(+). It catalyses the reaction L-homoserine + NAD(+) = L-aspartate 4-semialdehyde + NADH + H(+). The catalysed reaction is L-aspartate + ATP = 4-phospho-L-aspartate + ADP. Its pathway is amino-acid biosynthesis; L-lysine biosynthesis via DAP pathway; (S)-tetrahydrodipicolinate from L-aspartate: step 1/4. It participates in amino-acid biosynthesis; L-methionine biosynthesis via de novo pathway; L-homoserine from L-aspartate: step 1/3. It functions in the pathway amino-acid biosynthesis; L-methionine biosynthesis via de novo pathway; L-homoserine from L-aspartate: step 3/3. The protein operates within amino-acid biosynthesis; L-threonine biosynthesis; L-threonine from L-aspartate: step 1/5. Its pathway is amino-acid biosynthesis; L-threonine biosynthesis; L-threonine from L-aspartate: step 3/5. Its function is as follows. Bifunctional aspartate kinase and homoserine dehydrogenase that catalyzes the first and the third steps toward the synthesis of lysine, methionine and threonine from aspartate. The sequence is that of Bifunctional aspartokinase/homoserine dehydrogenase 2, chloroplastic (AKHSDH2) from Zea mays (Maize).